The chain runs to 244 residues: Triosephosphate isomerase (244 aa).

9–11 (NWK) provides a ligand contact to substrate. H93 acts as the Electrophile in catalysis. The Proton acceptor role is filled by E160. 2 residues coordinate substrate: G166 and S206.

The protein belongs to the triosephosphate isomerase family. As to quaternary structure, homodimer.

The protein resides in the cytoplasm. The enzyme catalyses D-glyceraldehyde 3-phosphate = dihydroxyacetone phosphate. Its pathway is carbohydrate biosynthesis; gluconeogenesis. It participates in carbohydrate degradation; glycolysis; D-glyceraldehyde 3-phosphate from glycerone phosphate: step 1/1. Involved in the gluconeogenesis. Catalyzes stereospecifically the conversion of dihydroxyacetone phosphate (DHAP) to D-glyceraldehyde-3-phosphate (G3P). This Mycoplasma genitalium (strain ATCC 33530 / DSM 19775 / NCTC 10195 / G37) (Mycoplasmoides genitalium) protein is Triosephosphate isomerase.